Consider the following 54-residue polypeptide: Large ribosomal subunit protein bL33A (54 aa).

It belongs to the bacterial ribosomal protein bL33 family.

This Mycolicibacterium gilvum (strain PYR-GCK) (Mycobacterium gilvum (strain PYR-GCK)) protein is Large ribosomal subunit protein bL33A.